Consider the following 247-residue polypeptide: Cell division protein ZapD (247 aa).

This sequence belongs to the ZapD family. Interacts with FtsZ.

The protein localises to the cytoplasm. In terms of biological role, cell division factor that enhances FtsZ-ring assembly. Directly interacts with FtsZ and promotes bundling of FtsZ protofilaments, with a reduction in FtsZ GTPase activity. The protein is Cell division protein ZapD of Escherichia coli O157:H7.